Consider the following 504-residue polypeptide: MSNPPTYTTSQGCPVSDAFSTQRISGTKISIKTPVGPLLLQDFKFLDSLAHFDRERIPERVVHAKGAGAYGVFEVTEDISDICSAKFLDTVGKKTKIFTRFSTVGGEKGSSDSARDPRGFATKFYTEEGNLDLVYNNTPIFFIRDPTKFPHFIHTQKRNPATNCKDANMFWDYLTNNPESLHQIMYLFSNRGTPTSYRKMNGYSGHSYKWYNAKGEWVSSVHFISNQGVHNMTDEEAGDLSGKDPDFQTMDLYKAIEQGDYPSWECYVQTMTLEEAKKQPFSVYDLTKVWPHKDFPLRHFGKFTLNENAQNYFAEVEQAAFSPSHTVPGMEPSNDPVLQSRLFSYPDTHRHRLGVNYSQIPVNCPMRAVFAPQIRDGSMMVNGNLGGTPNYAGAYNCPVQYQAPIKASSKTPEEQYEGETLSYDWTEVNEYDFYQPGRFWEVLGKTKGEQEALVHNVANHVSGADEFIQDRVFAYFSKANPVIGDLIRKEVLKKSPRGASKNKF.

Catalysis depends on residues His-63 and Asn-136. Tyr-345 contributes to the heme binding site. The short motif at 502–504 is the Microbody targeting signal element; the sequence is NKF.

This sequence belongs to the catalase family. Heme serves as cofactor.

It is found in the peroxisome matrix. It carries out the reaction 2 H2O2 = O2 + 2 H2O. In terms of biological role, catalyzes the degradation of hydrogen peroxide (H(2)O(2)) generated by peroxisomal oxidases to water and oxygen, thereby protecting cells from the toxic effects of hydrogen peroxide. This chain is Peroxisomal catalase (CTA1), found in Candida boidinii (Yeast).